The primary structure comprises 377 residues: G-protein coupled receptor 54 (377 aa).

The Extracellular portion of the chain corresponds to 1 to 49; sequence MYSSEELWNSTEQVWINGSGTNFSLGRHEDDEEEEGDKHPFFTDAWLVP. 3 N-linked (GlcNAc...) asparagine glycosylation sites follow: asparagine 9, asparagine 17, and asparagine 22. A helical membrane pass occupies residues 50 to 70; that stretch reads LFFSLIMLVGLVGNSLVIYVI. At 71–91 the chain is on the cytoplasmic side; it reads SKHRQMRTATNFYIANLAATD. Residues 92–112 traverse the membrane as a helical segment; it reads IIFLVCCVPFTATLYPLPGWI. The Extracellular segment spans residues 113–119; it reads FGNFMCK. A disulfide bond links cysteine 118 and cysteine 198. The chain crosses the membrane as a helical span at residues 120–140; that stretch reads FVAFLQQVTVQATCITLTAMS. Over 141–160 the chain is Cytoplasmic; that stretch reads GDRCYVTVYPLKSLRHRTPK. A helical membrane pass occupies residues 161–181; that stretch reads VAMIVSICIWIGSFVLSTPIL. The Extracellular portion of the chain corresponds to 182–209; that stretch reads MYQRIEEGYWYGPRQYCMERFPSKTHER. The helical transmembrane segment at 210 to 230 threads the bilayer; the sequence is AFILYQFIAAYLLPVLTISFC. Over 231 to 269 the chain is Cytoplasmic; sequence YTLMVKRVGQPTVEPVDNNYQVNLLSERTISIRSKVSKM. A helical membrane pass occupies residues 270 to 290; sequence VVVIVLLFAICWGPIQIFVLF. The Extracellular segment spans residues 291–305; sequence QSFYPNYQPNYATYK. Residues 306-328 form a helical membrane-spanning segment; that stretch reads IKTWANCMSYANSSVNPIVYGFM. Residues 329–377 are Cytoplasmic-facing; the sequence is GASFQKSFRKTFPFLFKHKVRDSSMASRTANAEIKFVAAEEGNNNNAVN.

The protein belongs to the G-protein coupled receptor 1 family. As to expression, expressed in a significantly high percentage (45-60%) of mature GnRH1, GnRH2, and GnRH3 neurons and in immature GnRH3 neurons, which had migrated to the vicinity of their final locations in the brain. Only 5% of immature GnRH1 and GnRH2 neurons have receptor transcripts.

The protein resides in the cell membrane. Receptor speculated to be essential for sexual development. May regulate gonadotropin-releasing hormone (GnRH) secretion. The receptor expression could be a 'stop signal' for GnRH1, GnRH2, and GnRH3 neuronal migration, leading to suppression of cell growth and modulation of GnRH secretion, which is important for normal sexual development. This is G-protein coupled receptor 54 (gpr54) from Oreochromis niloticus (Nile tilapia).